We begin with the raw amino-acid sequence, 154 residues long: 3-hydroxyacyl-[acyl-carrier-protein] dehydratase FabZ (154 aa).

The active site involves H55.

This sequence belongs to the thioester dehydratase family. FabZ subfamily.

It localises to the cytoplasm. It catalyses the reaction a (3R)-hydroxyacyl-[ACP] = a (2E)-enoyl-[ACP] + H2O. Involved in unsaturated fatty acids biosynthesis. Catalyzes the dehydration of short chain beta-hydroxyacyl-ACPs and long chain saturated and unsaturated beta-hydroxyacyl-ACPs. The chain is 3-hydroxyacyl-[acyl-carrier-protein] dehydratase FabZ from Nitratidesulfovibrio vulgaris (strain ATCC 29579 / DSM 644 / CCUG 34227 / NCIMB 8303 / VKM B-1760 / Hildenborough) (Desulfovibrio vulgaris).